A 391-amino-acid polypeptide reads, in one-letter code: 3-ketoacyl-CoA thiolase (391 aa).

Cys-95 (acyl-thioester intermediate) is an active-site residue. Residues His-347 and Cys-377 each act as proton acceptor in the active site.

This sequence belongs to the thiolase-like superfamily. Thiolase family. As to quaternary structure, heterotetramer of two alpha chains (FadB) and two beta chains (FadA).

It is found in the cytoplasm. The catalysed reaction is an acyl-CoA + acetyl-CoA = a 3-oxoacyl-CoA + CoA. Its pathway is lipid metabolism; fatty acid beta-oxidation. Catalyzes the final step of fatty acid oxidation in which acetyl-CoA is released and the CoA ester of a fatty acid two carbons shorter is formed. The sequence is that of 3-ketoacyl-CoA thiolase from Pseudomonas savastanoi pv. phaseolicola (strain 1448A / Race 6) (Pseudomonas syringae pv. phaseolicola (strain 1448A / Race 6)).